Consider the following 71-residue polypeptide: Small ribosomal subunit protein bS21 (71 aa).

The segment at 43–71 (TERKRAKASAVKRHAKKLARENARRTRLY) is disordered. Basic residues predominate over residues 46–59 (KRAKASAVKRHAKK). Over residues 60–71 (LARENARRTRLY) the composition is skewed to basic and acidic residues.

It belongs to the bacterial ribosomal protein bS21 family.

This chain is Small ribosomal subunit protein bS21, found in Pectobacterium atrosepticum (strain SCRI 1043 / ATCC BAA-672) (Erwinia carotovora subsp. atroseptica).